The following is a 343-amino-acid chain: N-acetyl-gamma-glutamyl-phosphate reductase (343 aa).

Cys149 is a catalytic residue.

Belongs to the NAGSA dehydrogenase family. Type 1 subfamily.

The protein localises to the cytoplasm. The catalysed reaction is N-acetyl-L-glutamate 5-semialdehyde + phosphate + NADP(+) = N-acetyl-L-glutamyl 5-phosphate + NADPH + H(+). It participates in amino-acid biosynthesis; L-arginine biosynthesis; N(2)-acetyl-L-ornithine from L-glutamate: step 3/4. In terms of biological role, catalyzes the NADPH-dependent reduction of N-acetyl-5-glutamyl phosphate to yield N-acetyl-L-glutamate 5-semialdehyde. The protein is N-acetyl-gamma-glutamyl-phosphate reductase of Exiguobacterium sibiricum (strain DSM 17290 / CCUG 55495 / CIP 109462 / JCM 13490 / 255-15).